A 732-amino-acid polypeptide reads, in one-letter code: Ionotropic receptor 40a (732 aa).

Positions 1–19 (MHKFLALGLLPYLLGLLNS) are cleaved as a signal peptide. 3 N-linked (GlcNAc...) asparagine glycosylation sites follow: Asn-18, Asn-235, and Asn-299. Residues 20–369 (TRLTFIGNDE…RPFKQDIWPH (350 aa)) are Extracellular-facing. A helical membrane pass occupies residues 370-390 (LILTIIFSGPIFYGIIALPYI). Over 391-465 (WRRRWANSDV…NELHNGYRAK (75 aa)) the chain is Cytoplasmic. The helical transmembrane segment at 466 to 486 (FLTIVYWIAATYVLADVYSAQ) threads the bilayer. Topologically, residues 487 to 688 (LTSQFARPAR…LNLRMLQGAF (202 aa)) are extracellular. The N-linked (GlcNAc...) asparagine glycan is linked to Asn-531. A helical membrane pass occupies residues 689–709 (IALGVGSLAAGVILLLEIVFI). At 710–732 (KLDQARLWMLCSRLQWIRYDRKV) the chain is on the cytoplasmic side.

It belongs to the glutamate-gated ion channel (TC 1.A.10.1) family. In terms of tissue distribution, in the antenna, detected in sacculus neurons which innervate the first and second chambers (at protein level).

It localises to the cell membrane. Functionally, integral part of a neural sensory system in the antenna that provides the neural basis for the response to environmental changes in humidity (hygrosensation). Together with Ir25a and Ir93a, mediates the response of the hygrosensory sacculus neurons to changes in relative humidity and is required for dry detection behavior. This is Ionotropic receptor 40a from Drosophila melanogaster (Fruit fly).